Consider the following 408-residue polypeptide: Probable E3 ubiquitin-protein ligase makorin-1 (408 aa).

2 C3H1-type zinc fingers span residues 34-61 (WTRHVTCRYFIHGVCKEGINCRYSHDLA) and 63-90 (SRSAMICRYFQRGCCAYGDRCRYEHNKP). Disordered regions lie at residues 90 to 114 (PLQEDPTGDTCTAPSESLPEPSGNI) and 154 to 173 (EAYTQGTVKPDEGREEPADP). A compositionally biased stretch (basic and acidic residues) spans 162–173 (KPDEGREEPADP). The segment at 174 to 201 (ELKKQLCPYAAMGECRYGENCVYLHGDP) adopts a C3H1-type 3 zinc-finger fold. The segment at 202–229 (CDMCGLQVLHPVDTCQRSQHIKSCIEAH) is makorin-type Cys-His. An RING-type zinc finger spans residues 247 to 301 (CGICMEVVYEKTNPSERRFGILSNCSHSYCLKCIRKWRSAKQFESKIIKSCPECR). The segment at 330-359 (AMSSKSCRYFDEGRGTCPFGGNCFYRHAYP) adopts a C3H1-type 4 zinc-finger fold. The disordered stretch occupies residues 363–408 (IEEPQPRQKSGMSSRYRIPSPSAGIDFGSLTSERAETRLRTRKTKL).

The enzyme catalyses S-ubiquitinyl-[E2 ubiquitin-conjugating enzyme]-L-cysteine + [acceptor protein]-L-lysine = [E2 ubiquitin-conjugating enzyme]-L-cysteine + N(6)-ubiquitinyl-[acceptor protein]-L-lysine.. Its pathway is protein modification; protein ubiquitination. In terms of biological role, E3 ubiquitin ligase catalyzing the covalent attachment of ubiquitin moieties onto substrate proteins. The chain is Probable E3 ubiquitin-protein ligase makorin-1 (mkrn1) from Xenopus laevis (African clawed frog).